Consider the following 329-residue polypeptide: 36 kDa antigen (329 aa).

A helical membrane pass occupies residues alanine 11–tyrosine 31.

This sequence belongs to the membrane fusion protein (MFP) (TC 8.A.1) family.

Its subcellular location is the membrane. This Helicobacter pylori (strain ATCC 700392 / 26695) (Campylobacter pylori) protein is 36 kDa antigen.